Here is a 131-residue protein sequence, read N- to C-terminus: Small ribosomal subunit protein uS8 (131 aa).

The protein belongs to the universal ribosomal protein uS8 family. In terms of assembly, part of the 30S ribosomal subunit. Contacts proteins S5 and S12.

One of the primary rRNA binding proteins, it binds directly to 16S rRNA central domain where it helps coordinate assembly of the platform of the 30S subunit. This chain is Small ribosomal subunit protein uS8, found in Solibacter usitatus (strain Ellin6076).